We begin with the raw amino-acid sequence, 262 residues long: Ankyrin repeat domain-containing protein 7 (262 aa).

ANK repeat units lie at residues 67 to 96 (KYRTPLHLACANGHRDVVLFLIEQQCKINI), 100 to 129 (ENKSPLIKAVQCQNEDCATILLNCGADPNL), 133 to 162 (RYNTALHYAVCGQSFSLVEQLLDYEADLEA), 166 to 195 (DGYTPLLVAVINNNPKMVKFLLEKGADVNA), and 199 to 228 (YQRTALILAVSGEPTRLVKLLLQQGVELSC).

The protein is Ankyrin repeat domain-containing protein 7 (ANKRD7) of Macaca fascicularis (Crab-eating macaque).